The primary structure comprises 61 residues: Alpha-conotoxine-like Am1.3 (61 aa).

The first 21 residues, 1 to 21, serve as a signal peptide directing secretion; the sequence is MGMRMMFTVFLLVVLATTVVS. Positions 22–44 are excised as a propeptide; that stretch reads FMSGRASHGRNAAASDLIALTIK. C60 bears the Cysteine amide mark.

This sequence belongs to the conotoxin A superfamily. Post-translationally, is not hydroxylated. In terms of processing, contains 2 disulfide bonds. Expressed by the venom duct.

Its subcellular location is the secreted. In terms of biological role, alpha-conotoxins act on postsynaptic membranes, they bind to the nicotinic acetylcholine receptors (nAChR) and thus inhibit them. The sequence is that of Alpha-conotoxine-like Am1.3 from Conus amadis (Amadis cone).